Reading from the N-terminus, the 183-residue chain is Maltose O-acetyltransferase (183 aa).

Asn83 contributes to the acetyl-CoA binding site. His113 serves as the catalytic Proton donor/acceptor. Acetyl-CoA is bound by residues Gly140, Ser158, 163–164 (TK), Arg178, and Lys181.

It belongs to the transferase hexapeptide repeat family. As to quaternary structure, homodimer.

The enzyme catalyses D-maltose + acetyl-CoA = 1-O-acetylmaltose + CoA. In terms of biological role, catalyzes the CoA-dependent transfer of an acetyl group to maltose and other sugars. Acetylates glucose exclusively at the C6 position and maltose at the C6 position of the non-reducing end glucosyl moiety. Is able to acetylate maltooligosaccharides. This chain is Maltose O-acetyltransferase (maa), found in Escherichia coli (strain K12).